The following is a 176-amino-acid chain: Large ribosomal subunit protein uL6 (176 aa).

Belongs to the universal ribosomal protein uL6 family. As to quaternary structure, part of the 50S ribosomal subunit.

Functionally, this protein binds to the 23S rRNA, and is important in its secondary structure. It is located near the subunit interface in the base of the L7/L12 stalk, and near the tRNA binding site of the peptidyltransferase center. The protein is Large ribosomal subunit protein uL6 of Burkholderia ambifaria (strain ATCC BAA-244 / DSM 16087 / CCUG 44356 / LMG 19182 / AMMD) (Burkholderia cepacia (strain AMMD)).